Consider the following 451-residue polypeptide: Putative gluconeogenesis factor (451 aa).

It belongs to the gluconeogenesis factor family.

Its subcellular location is the cytoplasm. Its function is as follows. Required for morphogenesis under gluconeogenic growth conditions. The sequence is that of Putative gluconeogenesis factor from Clostridium acetobutylicum (strain ATCC 824 / DSM 792 / JCM 1419 / IAM 19013 / LMG 5710 / NBRC 13948 / NRRL B-527 / VKM B-1787 / 2291 / W).